A 779-amino-acid chain; its full sequence is Transcription factor SPT20 homolog (779 aa).

At serine 296 the chain carries Phosphoserine. Disordered stretches follow at residues 373–392 (DEES…DHSN) and 420–507 (PVKM…IPRK). The span at 424–437 (SHSSSGSASLSQVS) shows a compositional bias: low complexity. The segment covering 445-454 (TETVSVQSSV) has biased composition (polar residues). The span at 470 to 479 (SSSGNSSSGN) shows a compositional bias: low complexity. Phosphothreonine is present on threonine 494. A phosphoserine mark is found at serine 519 and serine 524. Disordered regions lie at residues 641 to 677 (QLSQ…EQAL) and 755 to 779 (LHHH…TPKF). The span at 755–771 (LHHHRHTGSQSKSKMKR) shows a compositional bias: basic residues.

This sequence belongs to the SPT20 family. Interacts with MAPK14. Interacts with ATG9A. In terms of tissue distribution, highly expressed in testis, moderately in brain and pituitary gland. Expressed in several fetal tissues, including lung, brain, thymus and kidney. Expression is down-regulated in malignant prostate tissues.

It is found in the nucleus. Required for MAP kinase p38 (MAPK11, MAPK12, MAPK13 and/or MAPK14) activation during gastrulation. Required for down-regulation of E-cadherin during gastrulation by regulating E-cadherin protein level downstream from NCK-interacting kinase (NIK) and independently of the regulation of transcription by FGF signaling and Snail. Required for starvation-induced ATG9A trafficking during autophagy. This chain is Transcription factor SPT20 homolog (SUPT20H), found in Homo sapiens (Human).